A 274-amino-acid polypeptide reads, in one-letter code: NADPH-dependent 7-cyano-7-deazaguanine reductase (274 aa).

80–82 (VES) serves as a coordination point for substrate. Residue 82-83 (SK) coordinates NADPH. Cys-181 functions as the Thioimide intermediate in the catalytic mechanism. Asp-188 acts as the Proton donor in catalysis. 220–221 (HE) contributes to the substrate binding site. 249 to 250 (RG) lines the NADPH pocket.

It belongs to the GTP cyclohydrolase I family. QueF type 2 subfamily. In terms of assembly, homodimer.

Its subcellular location is the cytoplasm. The catalysed reaction is 7-aminomethyl-7-carbaguanine + 2 NADP(+) = 7-cyano-7-deazaguanine + 2 NADPH + 3 H(+). The protein operates within tRNA modification; tRNA-queuosine biosynthesis. Functionally, catalyzes the NADPH-dependent reduction of 7-cyano-7-deazaguanine (preQ0) to 7-aminomethyl-7-deazaguanine (preQ1). This Burkholderia multivorans (strain ATCC 17616 / 249) protein is NADPH-dependent 7-cyano-7-deazaguanine reductase.